Consider the following 151-residue polypeptide: Large ribosomal subunit protein bL9 (151 aa).

It belongs to the bacterial ribosomal protein bL9 family.

Its function is as follows. Binds to the 23S rRNA. This Mycolicibacterium vanbaalenii (strain DSM 7251 / JCM 13017 / BCRC 16820 / KCTC 9966 / NRRL B-24157 / PYR-1) (Mycobacterium vanbaalenii) protein is Large ribosomal subunit protein bL9.